The following is a 355-amino-acid chain: Probable butyrate kinase (355 aa).

The protein belongs to the acetokinase family.

It is found in the cytoplasm. It carries out the reaction butanoate + ATP = butanoyl phosphate + ADP. The sequence is that of Probable butyrate kinase from Listeria monocytogenes serotype 4b (strain CLIP80459).